Consider the following 336-residue polypeptide: Flavonoid 6-O-methyltransferase 4 (336 aa).

The S-adenosyl-L-methionine site is built by Y140 and D203. H241 functions as the Proton acceptor in the catalytic mechanism.

Belongs to the class I-like SAM-binding methyltransferase superfamily. Cation-independent O-methyltransferase family. In terms of assembly, homodimer. In terms of tissue distribution, expressed in leaves.

It carries out the reaction ladanein + S-adenosyl-L-methionine = salvigenin + S-adenosyl-L-homocysteine + H(+). It catalyses the reaction scutellarein 7-methyl ether + S-adenosyl-L-methionine = cirsimaritin + S-adenosyl-L-homocysteine + H(+). Its pathway is flavonoid metabolism. Its function is as follows. Flavonoid 6-O-methyltransferase involved in the biosynthesis of polymethoxylated flavonoids natural products such as nevadensin and salvigenin (SALV), aroma compounds which contribute to the flavor of sweet basil, and exhibit pharmacological activities such as anti-allergic, anti-oxidant, antibacterial, anti-proliferative, and anti-inflammatory effects. Catalyzes S-adenosylmethionine-dependent regioselective 6-O-methylation of flavonoids; active on various hydroxylated flavonoid substrates, including scutellarein-7-methyl ether (SCU7Me) and ladanein (LAD). The protein is Flavonoid 6-O-methyltransferase 4 of Ocimum basilicum (Sweet basil).